The following is a 135-amino-acid chain: T-cell receptor gamma chain V region 5/10-13 (135 aa).

The signal sequence occupies residues 1–18; sequence MLLLRWPTFCCLWVFGLG. The segment at 19–114 is v segment; it reads QLEQTELSVT…DEATYYCAVC (96 aa). Positions 115-135 are j segment; sequence RSGTSWVKIFAKGTKLVVIPP.

The sequence is that of T-cell receptor gamma chain V region 5/10-13 (Tcrg-V1) from Mus musculus (Mouse).